A 573-amino-acid chain; its full sequence is Proline--tRNA ligase (573 aa).

The protein belongs to the class-II aminoacyl-tRNA synthetase family. ProS type 1 subfamily. Homodimer.

Its subcellular location is the cytoplasm. It carries out the reaction tRNA(Pro) + L-proline + ATP = L-prolyl-tRNA(Pro) + AMP + diphosphate. In terms of biological role, catalyzes the attachment of proline to tRNA(Pro) in a two-step reaction: proline is first activated by ATP to form Pro-AMP and then transferred to the acceptor end of tRNA(Pro). As ProRS can inadvertently accommodate and process non-cognate amino acids such as alanine and cysteine, to avoid such errors it has two additional distinct editing activities against alanine. One activity is designated as 'pretransfer' editing and involves the tRNA(Pro)-independent hydrolysis of activated Ala-AMP. The other activity is designated 'posttransfer' editing and involves deacylation of mischarged Ala-tRNA(Pro). The misacylated Cys-tRNA(Pro) is not edited by ProRS. The polypeptide is Proline--tRNA ligase (Cupriavidus taiwanensis (strain DSM 17343 / BCRC 17206 / CCUG 44338 / CIP 107171 / LMG 19424 / R1) (Ralstonia taiwanensis (strain LMG 19424))).